The sequence spans 49 residues: Toxic protein HokB (49 aa).

A helical transmembrane segment spans residues 4–24; that stretch reads NPLVVCLLIICITILTFTLLT.

It belongs to the Hok/Gef family.

It is found in the cell inner membrane. In terms of biological role, toxic component of a type I toxin-antitoxin (TA) system. When overexpressed kills cells within minutes; causes collapse of the transmembrane potential and arrest of respiration. Expression leads to membrane depolarization; when protein levels are high enough depolarization probably leads to lowered metabolic activity which in turn induces some cells to enter the persistent state in which they transiently survive antibiotic exposure. Its toxic effect is probably neutralized by antisense antitoxin RNA SokB, which is encoded in trans on the opposite DNA strand. This chain is Toxic protein HokB, found in Escherichia coli (strain K12).